A 368-amino-acid chain; its full sequence is Aspartate-semialdehyde dehydrogenase (368 aa).

NADP(+)-binding positions include 10–13 (RGMV), 37–38 (TS), and Gln72. Residue Arg101 coordinates phosphate. The active-site Acyl-thioester intermediate is the Cys134. NADP(+)-binding positions include 160-161 (SG) and Pro191. Residue Glu239 coordinates substrate. Position 242 (Lys242) interacts with phosphate. Arg266 is a binding site for substrate. His273 (proton acceptor) is an active-site residue. Residue Gln349 participates in NADP(+) binding.

This sequence belongs to the aspartate-semialdehyde dehydrogenase family. Homodimer.

It carries out the reaction L-aspartate 4-semialdehyde + phosphate + NADP(+) = 4-phospho-L-aspartate + NADPH + H(+). Its pathway is amino-acid biosynthesis; L-lysine biosynthesis via DAP pathway; (S)-tetrahydrodipicolinate from L-aspartate: step 2/4. It functions in the pathway amino-acid biosynthesis; L-methionine biosynthesis via de novo pathway; L-homoserine from L-aspartate: step 2/3. The protein operates within amino-acid biosynthesis; L-threonine biosynthesis; L-threonine from L-aspartate: step 2/5. Catalyzes the NADPH-dependent formation of L-aspartate-semialdehyde (L-ASA) by the reductive dephosphorylation of L-aspartyl-4-phosphate. The polypeptide is Aspartate-semialdehyde dehydrogenase (Azotobacter vinelandii).